A 303-amino-acid polypeptide reads, in one-letter code: Aquaporin NIP1-2 (303 aa).

The disordered stretch occupies residues 1-39 (MAGREDGAAAGAMEEGQDSKEVKCESSEDGSSSSSSSRC). Residues 17-26 (QDSKEVKCES) show a composition bias toward basic and acidic residues. Helical transmembrane passes span 66 to 86 (ILAE…AVVV) and 91 to 111 (GGAV…MVLV). An NPA 1 motif is present at residues 123-125 (NPA). The next 3 helical transmembrane spans lie at 145-165 (VVAQ…VFGG), 188-208 (AAAL…GVAT), and 212-232 (AIGE…VLFA). The short motif at 241 to 243 (NPA) is the NPA 2 element. Residues 255–275 (YGGVWVYVAAPVSGTVCGAWA) form a helical membrane-spanning segment.

This sequence belongs to the MIP/aquaporin (TC 1.A.8) family. NIP (TC 1.A.8.12) subfamily. Expressed in roots and leaves, and at lower levels in anthers.

It localises to the membrane. Aquaporins facilitate the transport of water and small neutral solutes across cell membranes. This is Aquaporin NIP1-2 (NIP1-2) from Oryza sativa subsp. japonica (Rice).